The primary structure comprises 434 residues: Glutamate-1-semialdehyde 2,1-aminomutase 1 (434 aa).

K270 is subject to N6-(pyridoxal phosphate)lysine.

Belongs to the class-III pyridoxal-phosphate-dependent aminotransferase family. HemL subfamily. Homodimer. Requires pyridoxal 5'-phosphate as cofactor.

The protein localises to the cytoplasm. The catalysed reaction is (S)-4-amino-5-oxopentanoate = 5-aminolevulinate. The protein operates within porphyrin-containing compound metabolism; protoporphyrin-IX biosynthesis; 5-aminolevulinate from L-glutamyl-tRNA(Glu): step 2/2. The sequence is that of Glutamate-1-semialdehyde 2,1-aminomutase 1 from Bacillus anthracis (strain CDC 684 / NRRL 3495).